We begin with the raw amino-acid sequence, 517 residues long: Cytochrome P450 monooxygenase calE (517 aa).

N8 is a glycosylation site (N-linked (GlcNAc...) asparagine). The helical transmembrane segment at 14-34 threads the bilayer; the sequence is SLMHHYILIAILVASIIAMVV. Residue C458 participates in heme binding.

It belongs to the cytochrome P450 family. Heme serves as cofactor.

It localises to the membrane. Its pathway is secondary metabolite biosynthesis. In terms of biological role, cytochrome P450 monooxygenase; part of the gene cluster that mediates the biosynthesis of calbistrin A and related compounds. Calbistrin A is a secondary metabolite with an interesting structure that was recently found to have bioactivity against leukemia cells. It consists of two polyketides linked by an ester bond: a bicyclic decalin containing polyketide and a linear 12 carbon dioic acid structure. The polyketide synthase calA is probably responsible for forming the decalin moiety. Because calA lacks a designated enoylreductase (ER) domain, the required activity is provided by the trans-enoyl reductase calK. Following release from the PKS, calF then probably catalyzes the oxidation and the subsequent Diels Alder cycloisomerization that lead to the formation of the decalin moiety. The decalin polyketide backbone includes two C-methyl groups, at C7 and C11 in backbone, of which the C7 position is probably methylated by the methyltransferase domain of calA. A candidate for adding the methyl group at C11, if not done by CalA, is the cluster methyltransferase calH. Several additional tailoring enzymes within the cluster could be involved in the modification of the decalin polyketide product. Those include the 3 cytochrome P450 monooxygenases CalE, CalG and CalL, of which one might be responsible for the introduction of the extra hydroxyl group attached to the backbone of the decalin moiety, at position C9 in the backbone, that allows for attachment of the linear moiety. One tailoring enzyme activity that is expected to be involved in biosynthesis of calbistrin is an acyltransferase for connecting the two polyketide synthase products, and which could be performed by the cluster acyltransferase calJ. The enzyme responsible for the biosynthesis of the linear moiety, probably a second PKS, has not been identified yet. The chain is Cytochrome P450 monooxygenase calE from Penicillium decumbens.